We begin with the raw amino-acid sequence, 181 residues long: SecB-like chaperone Rv1957 (181 aa).

N-acetylthreonine is present on threonine 2.

Belongs to the SecB-like family. Homotetramer, interacts with antitoxin HigA1.

In terms of biological role, chaperone component of an atypical, type II toxin-antitoxin chaperone (TAC) system. Prevents antitoxin HigA1 aggregation in vitro at a 1:3 chaperone:antitoxin ratio, probably also protects antitoxin HigA1 from protease. Required for neutralization of toxin HigB1 upon ectopic expression in Mycobacterium marinum or E.coli. When expressed in E.coli complements a secB deletion, restores export of OmpA and MBP and inhibits aggregation of proOmpC although it is less efficient than endogenous SecB. Complements the general chaperone function of E.coli SecB less well. In Mycobacterium tuberculosis (strain ATCC 25618 / H37Rv), this protein is SecB-like chaperone Rv1957 (secBL).